The primary structure comprises 365 residues: uncharacterized protein (365 aa).

Disordered stretches follow at residues 119–157 (ERSR…QQES), 216–298 (RPPG…DISH), and 313–365 (SHHH…LSVG). Basic and acidic residues predominate over residues 326-340 (SDPRIESRDLPERPQ).

This is an uncharacterized protein from Homo sapiens (Human).